A 55-amino-acid chain; its full sequence is Spermatid nuclear transition protein 1 (55 aa).

Over residues M1–K42 the composition is skewed to basic residues. Residues M1–L55 form a disordered region. S9, S36, S37, and S40 each carry phosphoserine.

The protein belongs to the nuclear transition protein 1 family. As to expression, testis.

The protein resides in the nucleus. Its subcellular location is the chromosome. In terms of biological role, plays a key role in the replacement of histones to protamine in the elongating spermatids of mammals. In condensing spermatids, loaded onto the nucleosomes, where it promotes the recruitment and processing of protamines, which are responsible for histone eviction. This chain is Spermatid nuclear transition protein 1 (TNP1), found in Ovis aries (Sheep).